Here is a 979-residue protein sequence, read N- to C-terminus: Peptidyl-glycine alpha-amidating monooxygenase (979 aa).

Positions 1–24 (MAGRARSRLLLLLGLLALQSSCLA) are cleaved as a signal peptide. The interval 1 to 497 (MAGRARSRLL…EGPWEPELAG (497 aa)) is peptidylglycine alpha-hydroxylating monooxygenase. Positions 25-34 (FRSPLSVFKR) are excised as a propeptide. The Intragranular portion of the chain corresponds to 35–869 (FKETTRSFSN…KKLIKDPGSG (835 aa)). Intrachain disulfides connect cysteine 46-cysteine 185, cysteine 80-cysteine 125, cysteine 113-cysteine 130, cysteine 226-cysteine 333, and cysteine 292-cysteine 314. Residues histidine 106 and histidine 107 each contribute to the Cu(2+) site. The Cu(2+) site is built by histidine 171, histidine 241, histidine 243, and methionine 313. Positions 498 to 823 (DFHVEEALEW…SRLEVEHRSV (326 aa)) are peptidyl-alpha-hydroxyglycine alpha-amidating lyase. 4 NHL repeats span residues 501 to 544 (VEEA…NSFD), 570 to 611 (AEIL…LEPR), 620 to 665 (LGRS…FSPS), and 673 to 717 (GEES…FKTD). Residue valine 520 participates in Ca(2+) binding. Arginine 533 is a binding site for a protein. Histidine 585 lines the Zn(2+) pocket. Leucine 587 contributes to the Ca(2+) binding site. An intrachain disulfide couples cysteine 634 to cysteine 655. Residue tyrosine 654 participates in a protein binding. Histidine 690 is a binding site for Zn(2+). A disulfide bridge links cysteine 702 with cysteine 713. Arginine 706 serves as a coordination point for a protein. Asparagine 765 carries an N-linked (GlcNAc...) asparagine glycan. The NHL 5 repeat unit spans residues 769–812 (GEIIDVFKPVRKHFDMPHDIVASEDGTVYIGDAHTNTVWKFTLT). Histidine 786 lines the Zn(2+) pocket. Aspartate 787 provides a ligand contact to Ca(2+). The helical transmembrane segment at 870–893 (VPVVLITTLLVIPVVVLLAIAMFI) threads the bilayer. Residues 894-979 (RWKKSRAFGD…APLPTPAPSS (86 aa)) lie on the Cytoplasmic side of the membrane. Phosphoserine is present on residues serine 924, serine 925, serine 935, and serine 948. The segment at 931 to 948 (NFFASRKGYSRKGFDRVS) is interaction with RASSF9. Residues 943 to 979 (GFDRVSTEGSDQEKDEDDGSESEEEYSAPLPTPAPSS) are disordered. Threonine 949 is subject to Phosphothreonine. Serine 952 carries the phosphoserine; by UHMK1 modification. Over residues 955 to 968 (EKDEDDGSESEEEY) the composition is skewed to acidic residues. Position 964 is a phosphoserine (serine 964).

It in the C-terminal section; belongs to the peptidyl-alpha-hydroxyglycine alpha-amidating lyase family. This sequence in the N-terminal section; belongs to the copper type II ascorbate-dependent monooxygenase family. In terms of assembly, monomer. Interacts with RASSF9. Requires Zn(2+) as cofactor. The cofactor is Cu(2+).

Its subcellular location is the cytoplasmic vesicle. The protein resides in the secretory vesicle membrane. It carries out the reaction a [peptide]-C-terminal glycine + 2 L-ascorbate + O2 = a [peptide]-C-terminal (2S)-2-hydroxyglycine + 2 monodehydro-L-ascorbate radical + H2O. The catalysed reaction is a [peptide]-C-terminal (2S)-2-hydroxyglycine = a [peptide]-C-terminal amide + glyoxylate. The enzyme catalyses N-dodecanoylglycine + 2 L-ascorbate + O2 = N-dodecanoyl-(2S)-hydroxyglycine + 2 monodehydro-L-ascorbate radical + H2O. It catalyses the reaction N-dodecanoyl-(2S)-hydroxyglycine = dodecanamide + glyoxylate. It carries out the reaction N-(9Z,12Z,15Z)-octadecatrienoylglycine + 2 L-ascorbate + O2 = N-(9Z,12Z,15Z)-octadecatrienoyl-(2S)-hydroxyglycine + 2 monodehydro-L-ascorbate radical + H2O. The catalysed reaction is N-(9Z,12Z,15Z)-octadecatrienoyl-(2S)-hydroxyglycine = (9Z,12Z,15Z)-octadecatrienamide + glyoxylate. The enzyme catalyses N-(9Z-octadecenoyl)glycine + 2 L-ascorbate + O2 = N-(9Z-octadecenoyl)-(2S)-hydroxyglycine + 2 monodehydro-L-ascorbate radical + H2O. It catalyses the reaction N-(9Z-octadecenoyl)-(2S)-hydroxyglycine = (9Z)-octadecenamide + glyoxylate. It carries out the reaction N-tetradecanoylglycine + 2 L-ascorbate + O2 = N-tetradecanoyl-(2S)-hydroxyglycine + 2 monodehydro-L-ascorbate radical + H2O. The catalysed reaction is N-tetradecanoyl-(2S)-hydroxyglycine = tetradecamide + glyoxylate. The enzyme catalyses N-decanoylglycine + 2 L-ascorbate + O2 = N-decanoyl-(2S)-hydroxyglycine + 2 monodehydro-L-ascorbate radical + H2O. It catalyses the reaction N-decanoyl-(2S)-hydroxyglycine = decanamide + glyoxylate. It carries out the reaction N-octanoylglycine + 2 L-ascorbate + O2 = N-octanoyl-(2S)-hydroxyglycine + 2 monodehydro-L-ascorbate radical + H2O. The catalysed reaction is N-octanoyl-(2S)-hydroxyglycine = octanamide + glyoxylate. PAM activity is inhibited by EDTA, phenylglyoxal and diethyl pyrocarbonate. PAL activity is stimulated by cadmium and inhibited by mercury. Its function is as follows. Bifunctional enzyme that catalyzes amidation of the C-terminus of proteins. Alpha-amidation is present at the C-terminus of many endocrine hormones and neuropeptides and is required for their activity. C-terminal amidation also takes place in response to protein fragmentation triggered by oxidative stress, promoting degradation of amidated protein fragments by the proteasome. Alpha-amidation involves two sequential reactions, both of which are catalyzed by separate catalytic domains of the enzyme. The first step, catalyzed by peptidyl alpha-hydroxylating monooxygenase (PHM) domain, is the copper-, ascorbate-, and O2- dependent stereospecific hydroxylation (with S stereochemistry) at the alpha-carbon (C-alpha) of the C-terminal glycine of the peptidylglycine substrate. The second step, catalyzed by the peptidylglycine amidoglycolate lyase (PAL) domain, is the zinc-dependent cleavage of the N-C-alpha bond, producing the alpha-amidated peptide and glyoxylate. Similarly, catalyzes the two-step conversion of an N-fatty acylglycine to a primary fatty acid amide and glyoxylate. The polypeptide is Peptidyl-glycine alpha-amidating monooxygenase (Mus musculus (Mouse)).